We begin with the raw amino-acid sequence, 66 residues long: DNA-directed RNA polymerase subunit Rpo10 (66 aa).

Zn(2+)-binding residues include Cys7, Cys10, Cys44, and Cys45.

Belongs to the archaeal Rpo10/eukaryotic RPB10 RNA polymerase subunit family. As to quaternary structure, part of the RNA polymerase complex. It depends on Zn(2+) as a cofactor.

The protein localises to the cytoplasm. It carries out the reaction RNA(n) + a ribonucleoside 5'-triphosphate = RNA(n+1) + diphosphate. DNA-dependent RNA polymerase (RNAP) catalyzes the transcription of DNA into RNA using the four ribonucleoside triphosphates as substrates. This chain is DNA-directed RNA polymerase subunit Rpo10, found in Pyrobaculum aerophilum (strain ATCC 51768 / DSM 7523 / JCM 9630 / CIP 104966 / NBRC 100827 / IM2).